The following is a 571-amino-acid chain: Urease subunit alpha (571 aa).

The 439-residue stretch at 133–571 folds into the Urease domain; the sequence is GGIDTHVHFI…LPLTQRYFLF (439 aa). The Ni(2+) site is built by H138, H140, and K221. K221 is modified (N6-carboxylysine). H223 provides a ligand contact to substrate. Positions 250 and 276 each coordinate Ni(2+). H324 acts as the Proton donor in catalysis. D364 serves as a coordination point for Ni(2+).

This sequence belongs to the metallo-dependent hydrolases superfamily. Urease alpha subunit family. In terms of assembly, heterotrimer of UreA (gamma), UreB (beta) and UreC (alpha) subunits. Three heterotrimers associate to form the active enzyme. Ni cation serves as cofactor. Carboxylation allows a single lysine to coordinate two nickel ions.

Its subcellular location is the cytoplasm. It catalyses the reaction urea + 2 H2O + H(+) = hydrogencarbonate + 2 NH4(+). It participates in nitrogen metabolism; urea degradation; CO(2) and NH(3) from urea (urease route): step 1/1. The protein is Urease subunit alpha of Staphylococcus epidermidis (strain ATCC 35984 / DSM 28319 / BCRC 17069 / CCUG 31568 / BM 3577 / RP62A).